The following is a 529-amino-acid chain: Peptide chain release factor 3 (529 aa).

Positions 10–279 constitute a tr-type G domain; sequence EQRRCFGIIS…ALVEMAPAPG (270 aa). GTP contacts are provided by residues 19–26, 87–91, and 141–144; these read SHPDAGKT, DTPGH, and NKMD.

This sequence belongs to the TRAFAC class translation factor GTPase superfamily. Classic translation factor GTPase family. PrfC subfamily.

The protein resides in the cytoplasm. Functionally, increases the formation of ribosomal termination complexes and stimulates activities of RF-1 and RF-2. It binds guanine nucleotides and has strong preference for UGA stop codons. It may interact directly with the ribosome. The stimulation of RF-1 and RF-2 is significantly reduced by GTP and GDP, but not by GMP. In Desulfatibacillum aliphaticivorans, this protein is Peptide chain release factor 3.